We begin with the raw amino-acid sequence, 531 residues long: Acid-sensing ion channel 3 (531 aa).

Residues 1–43 (MKPTSGPEEARRPASDIRVFASNCSMHGLGHVFGPGSLSLRRG) are Cytoplasmic-facing. A helical transmembrane segment spans residues 44–61 (MWAAAVVLSVATFLYQVA). The Extracellular segment spans residues 62–441 (ERVRYYREFH…SELLGDIGGQ (380 aa)). Disulfide bonds link Cys92-Cys186, Cys164-Cys171, Cys282-Cys370, Cys315-Cys366, Cys319-Cys364, Cys328-Cys350, and Cys330-Cys342. The N-linked (GlcNAc...) asparagine glycan is linked to Asn175. The tract at residues 285-307 (ASLNPNYEPEPSDPLGSPSPSPS) is disordered. Residue Asn398 is glycosylated (N-linked (GlcNAc...) asparagine). A helical transmembrane segment spans residues 442 to 460 (MGLFIGASLLTILEILDYL). Residues 447–449 (GAS) carry the GAS motif; ion selectivity filter motif. The Cytoplasmic portion of the chain corresponds to 461 to 531 (CEVFRDKVLG…HRTCYLVTQL (71 aa)). A PDZ-binding motif is present at residues 528-531 (VTQL).

It belongs to the amiloride-sensitive sodium channel (TC 1.A.6) family. ASIC3 subfamily. In terms of assembly, can form homotrimeric channels. Heterotrimer; forms functional heterotrimers producing channel with different properties. Forms heterotrimers with ASIC2; gives rise to a biphasic current with a sustained current which discriminates poorly between Na(+) and K(+). Interacts with STOM; inhibits ASIC3 acid-evoked current. Interacts with LIN7B (via PDZ domain); increases ASIC3 expression at the plasma membrane. Interacts with MAGI1 (via PDZ domain); probably regulates ASIC3. Interacts with GOPC (via PDZ domain); probably regulates ASIC3. Interacts with DLG4 (via PDZ domain); reduces ASIC3 expression at the plasma membrane. In terms of tissue distribution, expressed by sensory neurons. Strongly expressed in brain, spinal cord, lung, lymph nodes, kidney, pituitary, heart and testis.

It localises to the cell membrane. Its subcellular location is the cytoplasm. The enzyme catalyses Na(+)(in) = Na(+)(out). It carries out the reaction K(+)(in) = K(+)(out). The catalysed reaction is Ca(2+)(in) = Ca(2+)(out). Its activity is regulated as follows. Inhibited by the diuretic drug amiloride. Inhibited by the diuretic drug triamterene. Potentiated by the vertebrate neuropeptide FF (NPFF) and the related FMRFamide. Specifically and reversibly inhibited by the a sea anemone toxin APETx2. In terms of biological role, forms pH-gated heterotrimeric sodium channels that act as postsynaptic excitatory receptors in the nervous system. Upon extracellular acidification, these channels generate a biphasic current with a fast inactivating and a slow sustained phase. ASIC3 is more sensitive to protons and gates between closed, open, and desensitized states faster than other ASICs. Displays high selectivity for sodium ions but can also permit the permeation of other cations. As a neuronal acid sensor, probably contributes to mechanoreception, acid nociception, and heat nociception. By forming heterotrimeric channels with ASIC2, generates a biphasic current with a fast inactivating and a slow sustained phase, which in sensory neurons is proposed to mediate the pain induced by acidosis that occurs in ischemic, damaged or inflamed tissues. This Homo sapiens (Human) protein is Acid-sensing ion channel 3.